Reading from the N-terminus, the 446-residue chain is Methionine aminopeptidase 2-1 (446 aa).

The segment at 1–88 (MAAQVTPELA…PPRVILSSIF (88 aa)) is disordered. Residues 32-44 (ENEDVESDDDNEG) show a composition bias toward acidic residues. Residues 57 to 72 (AKKKKKKKPKKKKKGG) show a composition bias toward basic residues. Histidine 196 is a binding site for substrate. A divalent metal cation-binding residues include aspartate 216, aspartate 227, and histidine 296. Histidine 304 provides a ligand contact to substrate. Residues glutamate 332 and glutamate 427 each coordinate a divalent metal cation.

Belongs to the peptidase M24A family. Methionine aminopeptidase eukaryotic type 2 subfamily. The cofactor is Co(2+). Zn(2+) serves as cofactor. It depends on Mn(2+) as a cofactor. Fe(2+) is required as a cofactor.

The protein localises to the cytoplasm. It catalyses the reaction Release of N-terminal amino acids, preferentially methionine, from peptides and arylamides.. Its function is as follows. Cotranslationally removes the N-terminal methionine from nascent proteins. The N-terminal methionine is often cleaved when the second residue in the primary sequence is small and uncharged (Met-Ala-, Cys, Gly, Pro, Ser, Thr, or Val). This Blastomyces gilchristii (strain SLH14081) (Blastomyces dermatitidis) protein is Methionine aminopeptidase 2-1.